We begin with the raw amino-acid sequence, 616 residues long: MKKQFDTEVNDLLYLIIHSLYSHKEIFLRELISNASDAIDKLKFLSLTNEKFKNIALEPKIEISFDDKSILIKDNGIGMDEQDLTNHLGVIAKSGTKEFINNLKQDEKKSASLIGQFGVGFYSAFIVSEKVEVTSKKALESDAYIWSSDGKTGYEIEKAKKEESGTEIKLYLNKEGLEYANKWKIQEIIKKYSNHINYPIYIKYSEPIMKDGKQEGIEEKEEKLNETTALWTKNKSEIKAEEYNEFYKNTTFDYENPLMHIHTKAEGNLEYTNLFYVPSKAPYDLYYPNTKPGVKLFINRIFITDSEGSLLPNYLRFIKGIIDCQDLPLNVSREILQQNKILSKIKSSSVKKILSELEKLSKKNPEKFSEFSKEFGRCIKEGVYSDFENREKLISLIRFKSSSVDGFVSFKEYKERMNESQKSIYYITGGKENILKENPIVAAYKEKGFEILIMDDELDEAILNLIPEYEGLKLKAINKNETSNELKDENFKKIEEEFKDTLTKVKEILKDHIKEVNLSATLIKEPSAIIIDSNDPTYQMQKIMLSMGQEVKEIKPILELNPNNKIVQNLKNLEPEKLEKISILLFEEAMLTSGMPSKNPGKFINIINEFIEKDFL.

The tract at residues 1 to 333 (MKKQFDTEVN…CQDLPLNVSR (333 aa)) is a; substrate-binding. Positions 334 to 542 (EILQQNKILS…SNDPTYQMQK (209 aa)) are b. A c region spans residues 543–616 (IMLSMGQEVK…INEFIEKDFL (74 aa)).

Belongs to the heat shock protein 90 family. As to quaternary structure, homodimer.

It localises to the cytoplasm. Molecular chaperone. Has ATPase activity. In Borreliella burgdorferi (strain ATCC 35210 / DSM 4680 / CIP 102532 / B31) (Borrelia burgdorferi), this protein is Chaperone protein HtpG.